We begin with the raw amino-acid sequence, 151 residues long: Chaperonin GroEL (151 aa).

Position 41–45 (41–45 (DGTTT)) interacts with ATP.

The protein belongs to the chaperonin (HSP60) family. As to quaternary structure, forms a cylinder of 14 subunits composed of two heptameric rings stacked back-to-back. Interacts with the co-chaperonin GroES.

Its subcellular location is the cytoplasm. The enzyme catalyses ATP + H2O + a folded polypeptide = ADP + phosphate + an unfolded polypeptide.. Its function is as follows. Together with its co-chaperonin GroES, plays an essential role in assisting protein folding. The GroEL-GroES system forms a nano-cage that allows encapsulation of the non-native substrate proteins and provides a physical environment optimized to promote and accelerate protein folding. This is Chaperonin GroEL from Mycobacteroides chelonae (Mycobacterium chelonae).